A 268-amino-acid polypeptide reads, in one-letter code: Undecaprenyl-diphosphatase (268 aa).

The next 7 membrane-spanning stretches (helical) occupy residues 43 to 63 (FWNTFTVLIQLGAILAIVVIY), 83 to 103 (FVIGVLAAFLPAVVVGLIAGK), 109 to 129 (LFNPWVVCFSLIVGGAVLMWV), 144 to 164 (FPLPMYIWIGIAQCLAMIPGV), 184 to 204 (AAEFSFFLAIPTMIGAFAYDF), 218 to 238 (IVAIGFVVSFVTAIVVVKAFL), and 246 to 266 (FTFFAWWRVIVGTLGLIALAL).

This sequence belongs to the UppP family.

Its subcellular location is the cell inner membrane. It catalyses the reaction di-trans,octa-cis-undecaprenyl diphosphate + H2O = di-trans,octa-cis-undecaprenyl phosphate + phosphate + H(+). In terms of biological role, catalyzes the dephosphorylation of undecaprenyl diphosphate (UPP). Confers resistance to bacitracin. The polypeptide is Undecaprenyl-diphosphatase (Nitrobacter hamburgensis (strain DSM 10229 / NCIMB 13809 / X14)).